Consider the following 443-residue polypeptide: UDP-N-acetylmuramate--L-alanine ligase (443 aa).

Gly-110–Ser-116 is an ATP binding site.

It belongs to the MurCDEF family.

The protein resides in the cytoplasm. The catalysed reaction is UDP-N-acetyl-alpha-D-muramate + L-alanine + ATP = UDP-N-acetyl-alpha-D-muramoyl-L-alanine + ADP + phosphate + H(+). It functions in the pathway cell wall biogenesis; peptidoglycan biosynthesis. Cell wall formation. In Lactococcus lactis subsp. cremoris (strain SK11), this protein is UDP-N-acetylmuramate--L-alanine ligase.